We begin with the raw amino-acid sequence, 155 residues long: Small ribosomal subunit protein uS7cz/uS7cy (155 aa).

It belongs to the universal ribosomal protein uS7 family. Part of the 30S ribosomal subunit.

Its subcellular location is the plastid. The protein resides in the chloroplast. In terms of biological role, one of the primary rRNA binding proteins, it binds directly to 16S rRNA where it nucleates assembly of the head domain of the 30S subunit. The sequence is that of Small ribosomal subunit protein uS7cz/uS7cy (rps7-A) from Eucalyptus globulus subsp. globulus (Tasmanian blue gum).